The following is a 457-amino-acid chain: ATP synthase subunit beta (457 aa).

147–154 is a binding site for ATP; that stretch reads GGAGVGKT.

This sequence belongs to the ATPase alpha/beta chains family. As to quaternary structure, F-type ATPases have 2 components, CF(1) - the catalytic core - and CF(0) - the membrane proton channel. CF(1) has five subunits: alpha(3), beta(3), gamma(1), delta(1), epsilon(1). CF(0) has three main subunits: a(1), b(2) and c(9-12). The alpha and beta chains form an alternating ring which encloses part of the gamma chain. CF(1) is attached to CF(0) by a central stalk formed by the gamma and epsilon chains, while a peripheral stalk is formed by the delta and b chains.

It localises to the cell inner membrane. The catalysed reaction is ATP + H2O + 4 H(+)(in) = ADP + phosphate + 5 H(+)(out). Functionally, produces ATP from ADP in the presence of a proton gradient across the membrane. The catalytic sites are hosted primarily by the beta subunits. This chain is ATP synthase subunit beta, found in Haemophilus ducreyi (strain 35000HP / ATCC 700724).